Reading from the N-terminus, the 373-residue chain is MKFELKKTEGRARRGRLVFDRGVVETPAFMPVGTYGTVKGMTPEEVKDTGAQILLGNTFHLWLRPGQDIMRKHGDLHDFMNWHGPILTDSGGFQVFSLGHIRKIKEEGVHFRNPINGEKIFLSPEKSMEIQNDLGSDVVMIFDECTPYPATHDVAKKSMEMSLRWATRSRQRFDELENKNALFGIIQGGVYEDLRDVSLKGLLDIGFDGYAVGGLAVGEPKEDMHRILKHVCPQIPEDKPRYLMGVGKPEDLVEGVRRGIDMFDCVMPTRNARNGHLFTTDGVVKIRNAKYKDDVTSLDAECDCYTCKNYTKSYLHHLDRCNEMLGARLNTIHNLRYYQRLMQGLRDAIDAGTLDDFVADFYQRQDKPVPSLD.

The active-site Proton acceptor is Asp-89. Substrate-binding positions include 89–93, Asp-143, Gln-187, and Gly-214; that span reads DSGGF. Positions 245 to 251 are RNA binding; that stretch reads GVGKPED. Catalysis depends on Asp-264, which acts as the Nucleophile. The tract at residues 269-273 is RNA binding; important for wobble base 34 recognition; the sequence is TRNAR. Zn(2+) contacts are provided by Cys-302, Cys-304, Cys-307, and His-333.

Belongs to the queuine tRNA-ribosyltransferase family. Homodimer. Within each dimer, one monomer is responsible for RNA recognition and catalysis, while the other monomer binds to the replacement base PreQ1. Requires Zn(2+) as cofactor.

It carries out the reaction 7-aminomethyl-7-carbaguanine + guanosine(34) in tRNA = 7-aminomethyl-7-carbaguanosine(34) in tRNA + guanine. Its pathway is tRNA modification; tRNA-queuosine biosynthesis. Catalyzes the base-exchange of a guanine (G) residue with the queuine precursor 7-aminomethyl-7-deazaguanine (PreQ1) at position 34 (anticodon wobble position) in tRNAs with GU(N) anticodons (tRNA-Asp, -Asn, -His and -Tyr). Catalysis occurs through a double-displacement mechanism. The nucleophile active site attacks the C1' of nucleotide 34 to detach the guanine base from the RNA, forming a covalent enzyme-RNA intermediate. The proton acceptor active site deprotonates the incoming PreQ1, allowing a nucleophilic attack on the C1' of the ribose to form the product. After dissociation, two additional enzymatic reactions on the tRNA convert PreQ1 to queuine (Q), resulting in the hypermodified nucleoside queuosine (7-(((4,5-cis-dihydroxy-2-cyclopenten-1-yl)amino)methyl)-7-deazaguanosine). This is Queuine tRNA-ribosyltransferase from Tolumonas auensis (strain DSM 9187 / NBRC 110442 / TA 4).